The sequence spans 673 residues: UvrABC system protein B (673 aa).

The Helicase ATP-binding domain occupies 26–414; sequence EGLEDGLAHQ…GGDVVDQVVR (389 aa). 39-46 serves as a coordination point for ATP; sequence GVTGSGKT. The short motif at 92-115 is the Beta-hairpin element; that stretch reads YYDYYQPEAYVPSSDTFIEKDASV. In terms of domain architecture, Helicase C-terminal spans 431 to 597; it reads QVDDLLSEIR…GLNKKVVDIL (167 aa). In terms of domain architecture, UVR spans 633 to 668; that stretch reads QQKIHELEGLMMQHAQNLEFEEAAQIRDQLHQLREL.

This sequence belongs to the UvrB family. As to quaternary structure, forms a heterotetramer with UvrA during the search for lesions. Interacts with UvrC in an incision complex.

Its subcellular location is the cytoplasm. Functionally, the UvrABC repair system catalyzes the recognition and processing of DNA lesions. A damage recognition complex composed of 2 UvrA and 2 UvrB subunits scans DNA for abnormalities. Upon binding of the UvrA(2)B(2) complex to a putative damaged site, the DNA wraps around one UvrB monomer. DNA wrap is dependent on ATP binding by UvrB and probably causes local melting of the DNA helix, facilitating insertion of UvrB beta-hairpin between the DNA strands. Then UvrB probes one DNA strand for the presence of a lesion. If a lesion is found the UvrA subunits dissociate and the UvrB-DNA preincision complex is formed. This complex is subsequently bound by UvrC and the second UvrB is released. If no lesion is found, the DNA wraps around the other UvrB subunit that will check the other stand for damage. This Shigella flexneri protein is UvrABC system protein B.